The chain runs to 356 residues: MKIALLAGDGIGPEIMAQAERVLRYFQQEGLQIELEPGLLGGCAVDATGEPFPEATRQLAIEADAILLGAVGGTQYDGLPREKRPEQGLLAIRKELNLFANLRPVVLYPELSNASTLKPEVVAGLDILIVRELTGDIYFGRPRGIEYRDGQKVGFNTMIYSESEIRRIAHVAFQAAGRRNGRLCSVDKMNVLECTQLWRDVVTETAQSYPDVTLSHMLVDNAAMQLVRNPRQFDVVVTGNMFGDILSDEASMLTGSIGMLPSASLDDRNKGLYEPIHGSAPDIAGKGIANPLATILSAAMMLRYSFNQETAASRIEHAVQKTLQQSYRTEDIYEAGMKKVGTVEMGDRVLANLQSR.

73 to 86 (GTQYDGLPREKRPE) is a binding site for NAD(+). Substrate-binding residues include arginine 93, arginine 103, arginine 131, and aspartate 220. 3 residues coordinate Mg(2+): aspartate 220, aspartate 244, and aspartate 248. 278 to 290 (GSAPDIAGKGIAN) is an NAD(+) binding site.

The protein belongs to the isocitrate and isopropylmalate dehydrogenases family. LeuB type 1 subfamily. As to quaternary structure, homodimer. The cofactor is Mg(2+). Requires Mn(2+) as cofactor.

The protein localises to the cytoplasm. The enzyme catalyses (2R,3S)-3-isopropylmalate + NAD(+) = 4-methyl-2-oxopentanoate + CO2 + NADH. It functions in the pathway amino-acid biosynthesis; L-leucine biosynthesis; L-leucine from 3-methyl-2-oxobutanoate: step 3/4. In terms of biological role, catalyzes the oxidation of 3-carboxy-2-hydroxy-4-methylpentanoate (3-isopropylmalate) to 3-carboxy-4-methyl-2-oxopentanoate. The product decarboxylates to 4-methyl-2 oxopentanoate. This is 3-isopropylmalate dehydrogenase from Nitrosomonas europaea (strain ATCC 19718 / CIP 103999 / KCTC 2705 / NBRC 14298).